A 151-amino-acid polypeptide reads, in one-letter code: Probable ubiquitin-conjugating enzyme E2 W-B (151 aa).

The region spanning 3 to 151 (SMQKRLQKEL…TKWWYHDDTC (149 aa)) is the UBC core domain. Cysteine 91 serves as the catalytic Glycyl thioester intermediate.

This sequence belongs to the ubiquitin-conjugating enzyme family.

Its subcellular location is the nucleus. The catalysed reaction is S-ubiquitinyl-[E1 ubiquitin-activating enzyme]-L-cysteine + [E2 ubiquitin-conjugating enzyme]-L-cysteine = [E1 ubiquitin-activating enzyme]-L-cysteine + S-ubiquitinyl-[E2 ubiquitin-conjugating enzyme]-L-cysteine.. It catalyses the reaction S-ubiquitinyl-[E1 ubiquitin-activating enzyme]-L-cysteine + [acceptor protein]-N-terminal-amino acid = [E1 ubiquitin-activating enzyme]-L-cysteine + N-terminal-ubiquitinyl-[acceptor protein].. It functions in the pathway protein modification; protein ubiquitination. Its function is as follows. Accepts ubiquitin from the E1 complex and catalyzes its covalent attachment to other proteins. Catalyzes monoubiquitination. Involved in degradation of misfolded chaperone substrate and DNA repair. This Danio rerio (Zebrafish) protein is Probable ubiquitin-conjugating enzyme E2 W-B (ube2wb).